The chain runs to 535 residues: CTP synthase (535 aa).

An amidoligase domain region spans residues 1–267 (MTKYIFVTGG…DQIVCDHLKL (267 aa)). Serine 13 is a CTP binding site. Position 13 (serine 13) interacts with UTP. 14 to 19 (SLGKGI) contributes to the ATP binding site. Tyrosine 54 contributes to the L-glutamine binding site. Aspartate 71 lines the ATP pocket. 2 residues coordinate Mg(2+): aspartate 71 and glutamate 141. CTP-binding positions include 148 to 150 (DIE), 188 to 193 (KTKPTQ), and lysine 224. Residues 188-193 (KTKPTQ) and lysine 224 each bind UTP. 240 to 242 (RDA) is a binding site for ATP. The Glutamine amidotransferase type-1 domain maps to 292–534 (KIALVGKYVE…VRASITNKES (243 aa)). Residue glycine 354 coordinates L-glutamine. Residue cysteine 381 is the Nucleophile; for glutamine hydrolysis of the active site. Residues 382 to 385 (LGMQ), glutamate 405, and arginine 462 each bind L-glutamine. Residues histidine 507 and glutamate 509 contribute to the active site.

This sequence belongs to the CTP synthase family. In terms of assembly, homotetramer.

It catalyses the reaction UTP + L-glutamine + ATP + H2O = CTP + L-glutamate + ADP + phosphate + 2 H(+). The catalysed reaction is L-glutamine + H2O = L-glutamate + NH4(+). The enzyme catalyses UTP + NH4(+) + ATP = CTP + ADP + phosphate + 2 H(+). It participates in pyrimidine metabolism; CTP biosynthesis via de novo pathway; CTP from UDP: step 2/2. With respect to regulation, allosterically activated by GTP, when glutamine is the substrate; GTP has no effect on the reaction when ammonia is the substrate. The allosteric effector GTP functions by stabilizing the protein conformation that binds the tetrahedral intermediate(s) formed during glutamine hydrolysis. Inhibited by the product CTP, via allosteric rather than competitive inhibition. In terms of biological role, catalyzes the ATP-dependent amination of UTP to CTP with either L-glutamine or ammonia as the source of nitrogen. Regulates intracellular CTP levels through interactions with the four ribonucleotide triphosphates. The polypeptide is CTP synthase (Bacillus cereus (strain ATCC 10987 / NRS 248)).